A 78-amino-acid chain; its full sequence is MAVKEEVVEILNTIIGEDISDQMDDDFFESGLLDSMSTVELLLDLESKFNIQAPVSEFNRDEWNTPNKVIAKVESLIG.

One can recognise a Carrier domain in the interval 1 to 77 (MAVKEEVVEI…KVIAKVESLI (77 aa)). S35 carries the post-translational modification O-(pantetheine 4'-phosphoryl)serine.

The protein belongs to the DltC family. Post-translationally, 4'-phosphopantetheine is transferred from CoA to a specific serine of apo-DCP.

The protein resides in the cytoplasm. The protein operates within cell wall biogenesis; lipoteichoic acid biosynthesis. Carrier protein involved in the D-alanylation of lipoteichoic acid (LTA). The loading of thioester-linked D-alanine onto DltC is catalyzed by D-alanine--D-alanyl carrier protein ligase DltA. The DltC-carried D-alanyl group is further transferred to cell membrane phosphatidylglycerol (PG) by forming an ester bond, probably catalyzed by DltD. D-alanylation of LTA plays an important role in modulating the properties of the cell wall in Gram-positive bacteria, influencing the net charge of the cell wall. The sequence is that of D-alanyl carrier protein from Leuconostoc citreum (strain KM20).